We begin with the raw amino-acid sequence, 756 residues long: 1,4-alpha-glucan branching enzyme GlgB (756 aa).

D431 serves as the catalytic Nucleophile. The active-site Proton donor is the E484.

It belongs to the glycosyl hydrolase 13 family. GlgB subfamily. In terms of assembly, monomer.

It catalyses the reaction Transfers a segment of a (1-&gt;4)-alpha-D-glucan chain to a primary hydroxy group in a similar glucan chain.. It functions in the pathway glycan biosynthesis; glycogen biosynthesis. Catalyzes the formation of the alpha-1,6-glucosidic linkages in glycogen by scission of a 1,4-alpha-linked oligosaccharide from growing alpha-1,4-glucan chains and the subsequent attachment of the oligosaccharide to the alpha-1,6 position. The protein is 1,4-alpha-glucan branching enzyme GlgB of Prochlorococcus marinus (strain MIT 9303).